Consider the following 635-residue polypeptide: Protein MICRORCHIDIA 1 (635 aa).

A disordered region spans residues 491-511; sequence RTVIPDQPPTVNTYNPSPLPS. Residues 588–635 are a coiled coil; sequence MRCEEYVKKENEVEQTVKSLEKELEEIKSKCAQLALLVDAKKKEMQQV.

The protein belongs to the MORC ATPase protein family. Homodimer and heterodimer with MORC6. Component of an RNA-directed DNA methylation (RdDM) complex that contains at least MORC6, MORC1/CRT1, MORC2, SWI3D and SUVH9. Binds directly to SUVH2 and SUVH9. Interacts with the resistance proteins RCY1, RPM1, SNC1, RPP8, SSI4 and RPS2. The interactions with various resistance proteins are disrupted when these resistance proteins are activated. Interacts with the PAMP recognition receptor FLS2. It depends on Mg(2+) as a cofactor. Requires Mn(2+) as cofactor. In terms of tissue distribution, expressed constitutively.

It is found in the nucleus. It localises to the endosome. Its function is as follows. Mediator of defense signaling triggered by distinct classes of R proteins. Required during hypersensitive response (HR) that confers disease resistance to turnip crinkle virus (TCV). Exhibits ATPase activity. Contributes to resistance against Pseudomonas syringae and Hyaloperonospora arabidopsidis, at early stages prior to cytosolic calcium ions Ca(2+) accumulation. Required for pathogen-associated molecular pattern (PAMP)-triggered immunity (PTI), basal resistance, non-host resistance and systemic acquired resistance (SAR). Binds DNA/RNA in a non-specific manner and exhibits endonuclease activity. Probably involved in DNA repair. Required for both RPP8- and SSI4-mediated resistance responses, thus being involved in both TIR- and CC-NB-LRR pathways. Involved in RNA-directed DNA methylation (RdDM) as a component of the RdDM machinery and required for gene silencing. May also be involved in the regulation of chromatin architecture to maintain gene silencing. The polypeptide is Protein MICRORCHIDIA 1 (Arabidopsis thaliana (Mouse-ear cress)).